Consider the following 410-residue polypeptide: Aspartic proteinase Asp1 (410 aa).

A signal peptide spans 1 to 23 (MTARLALLASLLLLLQLVPPSSA). A propeptide spans 24-46 (VVLELHGNVYPIGHFFVTMNIGD) (removed in mature form). The region spanning 38-392 (FFVTMNIGDP…DSERSLLGWV (355 aa)) is the Peptidase A1 domain. Residues aspartate 56 and aspartate 257 contribute to the active site.

Belongs to the peptidase A1 family. In terms of tissue distribution, expressed in pollen, nucellus, ovary wall, shoot and root meristem, coleoptiles of immature seeds, and somatic embryos.

In terms of biological role, possesses protease activity in vitro. This is Aspartic proteinase Asp1 (ASP1) from Oryza sativa subsp. indica (Rice).